The following is a 193-amino-acid chain: dCTP deaminase (193 aa).

DCTP contacts are provided by residues Arg-110–Arg-115, Asp-128, Val-136–Glu-138, Tyr-171, Lys-178, and Gln-182. The active-site Proton donor/acceptor is the Glu-138. Residues Arg-169–Asp-193 form a disordered region.

The protein belongs to the dCTP deaminase family. In terms of assembly, homotrimer.

The catalysed reaction is dCTP + H2O + H(+) = dUTP + NH4(+). It participates in pyrimidine metabolism; dUMP biosynthesis; dUMP from dCTP (dUTP route): step 1/2. In terms of biological role, catalyzes the deamination of dCTP to dUTP. In Yersinia pestis bv. Antiqua (strain Antiqua), this protein is dCTP deaminase.